The chain runs to 303 residues: Dipeptide transport system permease protein DppB (303 aa).

The next 7 membrane-spanning stretches (helical) occupy residues 9–29 (LGLL…MMQV), 62–82 (YFIY…IYTN), 93–113 (LPVS…LGAL), 129–149 (IFGF…GTLI), 166–186 (GTFS…MAVV), 227–247 (IPML…SVLI), and 269–289 (FPVI…FILV). One can recognise an ABC transmembrane type-1 domain in the interval 93–290 (LPVSMQLGTQ…VILMVFILVT (198 aa)).

This sequence belongs to the binding-protein-dependent transport system permease family. OppBC subfamily. As to quaternary structure, the complex is composed of two ATP-binding proteins (DppD and DppF), two transmembrane proteins (DppB and DppC) and a solute-binding protein (DppA).

The protein resides in the cell membrane. In terms of biological role, part of the ABC transporter DppABCDF involved in dipeptide transport. Responsible for the translocation of the substrate across the membrane. This Lactococcus lactis subsp. cremoris (strain MG1363) protein is Dipeptide transport system permease protein DppB.